Here is a 673-residue protein sequence, read N- to C-terminus: UvrABC system protein B (673 aa).

The 158-residue stretch at 26–183 folds into the Helicase ATP-binding domain; the sequence is EGLEDGLAHQ…RRLAELQYAR (158 aa). 39–46 lines the ATP pocket; sequence GVTGSGKT. Positions 92–115 match the Beta-hairpin motif; sequence YYDYYQPEAYVPSSDTFIEKDASV. The 167-residue stretch at 431-597 folds into the Helicase C-terminal domain; that stretch reads QVDDLLSEIR…GLNKKVVDIL (167 aa). The segment at 608–627 is disordered; it reads AKGRGKSRPIVEPDNVPMDM. Residues 633 to 668 form the UVR domain; the sequence is QQKIHELEGLMMQHAQNLEFEEAAQIRDQLHLLREL.

Belongs to the UvrB family. In terms of assembly, forms a heterotetramer with UvrA during the search for lesions. Interacts with UvrC in an incision complex.

It localises to the cytoplasm. The UvrABC repair system catalyzes the recognition and processing of DNA lesions. A damage recognition complex composed of 2 UvrA and 2 UvrB subunits scans DNA for abnormalities. Upon binding of the UvrA(2)B(2) complex to a putative damaged site, the DNA wraps around one UvrB monomer. DNA wrap is dependent on ATP binding by UvrB and probably causes local melting of the DNA helix, facilitating insertion of UvrB beta-hairpin between the DNA strands. Then UvrB probes one DNA strand for the presence of a lesion. If a lesion is found the UvrA subunits dissociate and the UvrB-DNA preincision complex is formed. This complex is subsequently bound by UvrC and the second UvrB is released. If no lesion is found, the DNA wraps around the other UvrB subunit that will check the other stand for damage. The protein is UvrABC system protein B of Escherichia coli O81 (strain ED1a).